Reading from the N-terminus, the 315-residue chain is Gamma-hemolysin component C (315 aa).

Residues 1–29 form the signal peptide; it reads MLKNKILATTLSVSLLAPLANPLLENAKA.

It belongs to the aerolysin family. Toxicity requires sequential binding and synergistic association of a class S and a class F component which form heterooligomeric complexes. HlgC (class S) associates with HlgB (class F) thus forming an CB toxin.

Toxin that seems to act by forming pores in the membrane of the cell. Has a hemolytic and a leucotoxic activity. The chain is Gamma-hemolysin component C (hlgC) from Staphylococcus aureus (strain MRSA252).